The primary structure comprises 381 residues: Homoserine O-succinyltransferase (381 aa).

The 316-residue stretch at 45–360 (NAVLVCHALN…PHGHDAFLLD (316 aa)) folds into the AB hydrolase-1 domain. Ser-151 serves as the catalytic Nucleophile. Residue Arg-221 coordinates substrate. Residues Asp-321 and His-354 contribute to the active site. Position 355 (Asp-355) interacts with substrate.

The protein belongs to the AB hydrolase superfamily. MetX family. Homodimer.

The protein localises to the cytoplasm. It carries out the reaction L-homoserine + succinyl-CoA = O-succinyl-L-homoserine + CoA. It functions in the pathway amino-acid biosynthesis; L-methionine biosynthesis via de novo pathway; O-succinyl-L-homoserine from L-homoserine: step 1/1. In terms of biological role, transfers a succinyl group from succinyl-CoA to L-homoserine, forming succinyl-L-homoserine. This chain is Homoserine O-succinyltransferase, found in Paraburkholderia phytofirmans (strain DSM 17436 / LMG 22146 / PsJN) (Burkholderia phytofirmans).